The following is a 470-amino-acid chain: 3-isopropylmalate dehydratase large subunit (470 aa).

C351, C411, and C414 together coordinate [4Fe-4S] cluster.

It belongs to the aconitase/IPM isomerase family. LeuC type 1 subfamily. As to quaternary structure, heterodimer of LeuC and LeuD. [4Fe-4S] cluster is required as a cofactor.

The enzyme catalyses (2R,3S)-3-isopropylmalate = (2S)-2-isopropylmalate. Its pathway is amino-acid biosynthesis; L-leucine biosynthesis; L-leucine from 3-methyl-2-oxobutanoate: step 2/4. Its function is as follows. Catalyzes the isomerization between 2-isopropylmalate and 3-isopropylmalate, via the formation of 2-isopropylmaleate. In Rhodopseudomonas palustris (strain HaA2), this protein is 3-isopropylmalate dehydratase large subunit.